The chain runs to 222 residues: GTP cyclohydrolase 1 (222 aa).

Zn(2+) is bound by residues cysteine 111, histidine 114, and cysteine 182.

The protein belongs to the GTP cyclohydrolase I family. Homomer.

The enzyme catalyses GTP + H2O = 7,8-dihydroneopterin 3'-triphosphate + formate + H(+). It participates in cofactor biosynthesis; 7,8-dihydroneopterin triphosphate biosynthesis; 7,8-dihydroneopterin triphosphate from GTP: step 1/1. The chain is GTP cyclohydrolase 1 from Salmonella gallinarum (strain 287/91 / NCTC 13346).